The following is a 372-amino-acid chain: Coxsackievirus and adenovirus receptor homolog (372 aa).

A signal peptide spans 1–22 (MDMRTSFLCVTYVILLTGSACG). Ig-like C2-type domains are found at residues 23–140 (LQIT…YLLT) and 130–234 (PGIA…VTIT). Over 23–241 (LQITSTGQTS…TITQPPNTAG (219 aa)) the chain is Extracellular. 3 cysteine pairs are disulfide-bonded: C45–C124, C150–C227, and C166–C216. N205 carries N-linked (GlcNAc...) asparagine glycosylation. Residues 242–262 (IIAGVIICILLLLILLALILF) traverse the membrane as a helical segment. The Cytoplasmic portion of the chain corresponds to 263-372 (CCCRARHKKK…PAQNKDGSIV (110 aa)). The tract at residues 286 to 352 (PPPKSRVSTA…PPSRMAGPNL (67 aa)) is disordered. Positions 291–317 (RVSTARSFTSVGSQRSSLGSMSPSNLH) are enriched in polar residues. The span at 318 to 336 (EYSKPQYDKIPSEEYDRPP) shows a compositional bias: basic and acidic residues.

Monomer. Probably homodimer formed by 2 molecules on adjacent cells.

The protein resides in the cell membrane. Its subcellular location is the basolateral cell membrane. It is found in the cell junction. The protein localises to the tight junction. It localises to the adherens junction. Its function is as follows. May function as a homophilic cell adhesion molecule and be essential for tight junction integrity. May also be involved in transepithelial migration of leukocytes through adhesive interactions with jaml. The interaction between both receptors may also mediate the activation of gamma-delta T-cells, a subpopulation of T-cells residing in epithelia and involved in tissue homeostasis and repair. In Danio rerio (Zebrafish), this protein is Coxsackievirus and adenovirus receptor homolog (cxadr).